Here is a 528-residue protein sequence, read N- to C-terminus: Protein MGF 505-7R (528 aa).

Belongs to the asfivirus MGF 505 family. As to quaternary structure, interacts with host STING1. Interacts with host JAK1; this interaction leads to JAK1 degradation. Interacts with host JAK2; this interaction leads to JAK2 degradation. Interacts with host RELA; this interaction inhibits NF-kappa-B promoter activity.

The protein resides in the host cytoplasm. Functionally, plays a role in virus cell tropism, and may be required for efficient virus replication in macrophages. Interferes with host NF-kappa-B promoter activity mediated by TLR8. Mechanistically, inhibits the phosphorylation and subsequent nuclear translocation of host NF-kappa-B RELA subunit downstream of TLR8. Promotes the expression of the autophagy-related protein host ULK1 to degrade host STING and inhibit the interferon response. Also inhibits JAK1- and JAK2-mediated signaling and thus negatively regulates the IFN-gamma signaling. In African swine fever virus (isolate Pig/Kenya/KEN-50/1950) (ASFV), this protein is Protein MGF 505-7R.